Here is a 487-residue protein sequence, read N- to C-terminus: Glutamyl-tRNA(Gln) amidotransferase subunit A (487 aa).

Residues Lys-74 and Ser-149 each act as charge relay system in the active site. Ser-173 functions as the Acyl-ester intermediate in the catalytic mechanism.

Belongs to the amidase family. GatA subfamily. Heterotrimer of A, B and C subunits.

The catalysed reaction is L-glutamyl-tRNA(Gln) + L-glutamine + ATP + H2O = L-glutaminyl-tRNA(Gln) + L-glutamate + ADP + phosphate + H(+). Its function is as follows. Allows the formation of correctly charged Gln-tRNA(Gln) through the transamidation of misacylated Glu-tRNA(Gln) in organisms which lack glutaminyl-tRNA synthetase. The reaction takes place in the presence of glutamine and ATP through an activated gamma-phospho-Glu-tRNA(Gln). The sequence is that of Glutamyl-tRNA(Gln) amidotransferase subunit A from Synechococcus sp. (strain WH7803).